The chain runs to 370 residues: Dual-specificity RNA methyltransferase RlmN (370 aa).

Catalysis depends on Glu-93, which acts as the Proton acceptor. The Radical SAM core domain maps to 99–337 (EEGRGTLCVS…VTTVRKTRGD (239 aa)). Cys-106 and Cys-343 form a disulfide bridge. [4Fe-4S] cluster-binding residues include Cys-113, Cys-117, and Cys-120. S-adenosyl-L-methionine-binding positions include 167–168 (GE), Ser-199, 221–223 (SLH), and Asn-300. Cys-343 serves as the catalytic S-methylcysteine intermediate.

Belongs to the radical SAM superfamily. RlmN family. [4Fe-4S] cluster serves as cofactor.

Its subcellular location is the cytoplasm. It carries out the reaction adenosine(2503) in 23S rRNA + 2 reduced [2Fe-2S]-[ferredoxin] + 2 S-adenosyl-L-methionine = 2-methyladenosine(2503) in 23S rRNA + 5'-deoxyadenosine + L-methionine + 2 oxidized [2Fe-2S]-[ferredoxin] + S-adenosyl-L-homocysteine. It catalyses the reaction adenosine(37) in tRNA + 2 reduced [2Fe-2S]-[ferredoxin] + 2 S-adenosyl-L-methionine = 2-methyladenosine(37) in tRNA + 5'-deoxyadenosine + L-methionine + 2 oxidized [2Fe-2S]-[ferredoxin] + S-adenosyl-L-homocysteine. In terms of biological role, specifically methylates position 2 of adenine 2503 in 23S rRNA and position 2 of adenine 37 in tRNAs. m2A2503 modification seems to play a crucial role in the proofreading step occurring at the peptidyl transferase center and thus would serve to optimize ribosomal fidelity. The protein is Dual-specificity RNA methyltransferase RlmN of Francisella philomiragia subsp. philomiragia (strain ATCC 25017 / CCUG 19701 / FSC 153 / O#319-036).